The following is a 118-amino-acid chain: Succinate dehydrogenase assembly factor 1, mitochondrial (118 aa).

An LYR motif 1; required for interaction with HSC20 motif is present at residues 14-16 (LYR). Positions 53–55 (LYR) match the LYR motif 2; not required for interaction with HSC20 motif. Positions 53 to 65 (LYRRGRRQLQMLR) are interaction with SDHB. Positions 72-118 (MGAFVRTRGPTEESNGAGAPGTLSGEGDDPRKPLDSMRTPKTPLDGR) are disordered.

Belongs to the complex I LYR family. SDHAF1 subfamily. In terms of assembly, interacts with SDHB within an SDHA-SDHB subcomplex. Also interacts with the iron-sulfur transfer complex formed by HSC20, HSPA9 and ISCU through direct binding to HSC20. Binding of SDHAF1 to SDHB precedes and is necessary for recruitment of the iron-sulfur transfer complex by SDHAF1.

The protein resides in the mitochondrion matrix. Functionally, plays an essential role in the assembly of succinate dehydrogenase (SDH), an enzyme complex (also referred to as respiratory complex II) that is a component of both the tricarboxylic acid (TCA) cycle and the mitochondrial electron transport chain, and which couples the oxidation of succinate to fumarate with the reduction of ubiquinone (coenzyme Q) to ubiquinol. Promotes maturation of the iron-sulfur protein subunit SDHB of the SDH catalytic dimer, protecting it from the deleterious effects of oxidants. May act together with SDHAF3. Contributes to iron-sulfur cluster incorporation into SDHB by binding to SDHB and recruiting the iron-sulfur transfer complex formed by HSC20, HSPA9 and ISCU through direct binding to HSC20. The polypeptide is Succinate dehydrogenase assembly factor 1, mitochondrial (Bos taurus (Bovine)).